The chain runs to 410 residues: MVCFRLFPVPGSGLVLVCLVLGAVRSYALELNLTDSENATCLYAKWQMNFTVRYETTNKTYKTVTISDHGTVTYNGSICGDDQNGPKIAVQFGPGFSWIANFTKAASTYSIDSVSFSYNTGDNTTFPDAEDKGILTVDELLAIRIPLNDLFRCNSLSTLEKNDVVQHYWDVLVQAFVQNGTVSTNEFLCDKDKTSTVAPTIHTTVPSPTTTPTPKEKPEAGTYSVNNGNDTCLLATMGLQLNITQDKVASVININPNTTHSTGSCRSHTALLRLNSSTIKYLDFVFAVKNENRFYLKEVNISMYLVNGSVFSIANNNLSYWDAPLGSSYMCNKEQTVSVSGAFQINTFDLRVQPFNVTQGKYSTAQDCSADDDNFLVPIAVGAALAGVLILVLLAYFIGLKHHHAGYEQF.

The signal sequence occupies residues 1 to 28 (MVCFRLFPVPGSGLVLVCLVLGAVRSYA). The interval 29 to 192 (LELNLTDSEN…STNEFLCDKD (164 aa)) is first lumenal domain. Residues 29 to 375 (LELNLTDSEN…QDCSADDDNF (347 aa)) are Lumenal-facing. N32 and N38 each carry an N-linked (GlcNAc...) (polylactosaminoglycan) asparagine glycan. The cysteines at positions 41 and 79 are disulfide-linked. Residues N49, N58, N75, N101, N123, and N179 are each glycosylated (N-linked (GlcNAc...) asparagine). An intrachain disulfide couples C153 to C189. The tract at residues 193–228 (KTSTVAPTIHTTVPSPTTTPTPKEKPEAGTYSVNNG) is hinge. Residue S195 is glycosylated (O-linked (GalNAc...) serine). Residues T196, T200, T203, and T204 are each glycosylated (O-linked (GalNAc...) threonine). The segment covering 199 to 213 (PTIHTTVPSPTTTPT) has biased composition (low complexity). Residues 199-221 (PTIHTTVPSPTTTPTPKEKPEAG) are disordered. S207 carries O-linked (GalNAc...) serine; partial glycosylation. Residue T209 is glycosylated (O-linked (GalNAc...) threonine; partial). O-linked (GalNAc...) threonine glycosylation is found at T210 and T211. T213 carries an O-linked (GalNAc...) threonine; partial glycan. 5 N-linked (GlcNAc...) asparagine glycosylation sites follow: N229, N242, N257, N275, and N300. The interval 229–375 (NDTCLLATMG…QDCSADDDNF (147 aa)) is second lumenal domain. An intrachain disulfide couples C232 to C265. The N-linked (GlcNAc...) (polylactosaminoglycan) asparagine glycan is linked to N307. 2 N-linked (GlcNAc...) asparagine glycosylation sites follow: N317 and N356. C331 and C368 are oxidised to a cystine. The chain crosses the membrane as a helical span at residues 376–399 (LVPIAVGAALAGVLILVLLAYFIG). Topologically, residues 400–410 (LKHHHAGYEQF) are cytoplasmic. An important for binding and subsequent lysosomal degradation of target proteins region spans residues 401 to 404 (KHHH).

This sequence belongs to the LAMP family. Monomer. Homodimer. Homotrimer. Forms large homooligomers. Interacts (via its cytoplasmic region) with HSPA8; HSPA8 mediates recruitment of proteins with a KFERQ motif to the surface of the lysosome for chaperone-mediated autophagy. Interacts with HSP90 in the lysosome lumen; this enhances LAMP2 stability. Interacts with MLLT11. Interacts with ABCB9. Interacts with FURIN. Interacts with CT55; this interaction may be important for LAMP2 protein stability. Interacts with TMEM175; inhibiting the proton channel activity of TMEM175. Forms a ternary complex with RAB7A and RUFY4 (via RUN domain); the interaction with RAB7A is mediated by RUFY4 (via RUN and coiled coil domains). As to quaternary structure, (Microbial infection) Interacts with mumps virus protein F; this interaction promotes protein F cleavage by FURIN. O- and N-glycosylated; some of the 16 N-linked glycans are polylactosaminoglycans. As to expression, isoform LAMP-2A is highly expressed in placenta, lung and liver, less in kidney and pancreas, low in brain and skeletal muscle. Isoform LAMP-2B is detected in spleen, thymus, prostate, testis, small intestine, colon, skeletal muscle, brain, placenta, lung, kidney, ovary and pancreas and liver. Isoform LAMP-2C is detected in small intestine, colon, heart, brain, skeletal muscle, and at lower levels in kidney and placenta.

It localises to the lysosome membrane. It is found in the endosome membrane. The protein localises to the cell membrane. The protein resides in the cytoplasmic vesicle. Its subcellular location is the autophagosome membrane. Functionally, lysosomal membrane glycoprotein which plays an important role in lysosome biogenesis, lysosomal pH regulation and autophagy. Acts as an important regulator of lysosomal lumen pH regulation by acting as a direct inhibitor of the proton channel TMEM175, facilitating lysosomal acidification for optimal hydrolase activity. Plays an important role in chaperone-mediated autophagy, a process that mediates lysosomal degradation of proteins in response to various stresses and as part of the normal turnover of proteins with a long biological half-live. Functions by binding target proteins, such as GAPDH, NLRP3 and MLLT11, and targeting them for lysosomal degradation. In the chaperone-mediated autophagy, acts downstream of chaperones, such as HSPA8/HSC70, which recognize and bind substrate proteins and mediate their recruitment to lysosomes, where target proteins bind LAMP2. Plays a role in lysosomal protein degradation in response to starvation. Required for the fusion of autophagosomes with lysosomes during autophagy. Cells that lack LAMP2 express normal levels of VAMP8, but fail to accumulate STX17 on autophagosomes, which is the most likely explanation for the lack of fusion between autophagosomes and lysosomes. Required for normal degradation of the contents of autophagosomes. Required for efficient MHC class II-mediated presentation of exogenous antigens via its function in lysosomal protein degradation; antigenic peptides generated by proteases in the endosomal/lysosomal compartment are captured by nascent MHC II subunits. Is not required for efficient MHC class II-mediated presentation of endogenous antigens. In terms of biological role, modulates chaperone-mediated autophagy. Decreases presentation of endogenous antigens by MHCII. Does not play a role in the presentation of exogenous and membrane-derived antigens by MHCII. (Microbial infection) Supports the FURIN-mediated cleavage of mumps virus fusion protein F by interacting with both FURIN and the unprocessed form but not the processed form of the viral protein F. This is Lysosome-associated membrane glycoprotein 2 (LAMP2) from Homo sapiens (Human).